The chain runs to 371 residues: Chaperone protein DnaJ (371 aa).

A J domain is found at C5–G70. The segment at G127–Q204 adopts a CR-type zinc-finger fold. 8 residues coordinate Zn(2+): C140, C143, C156, C159, C178, C181, C192, and C195. 4 CXXCXGXG motif repeats span residues C140–G147, C156–G163, C178–G185, and C192–G199.

The protein belongs to the DnaJ family. Homodimer. Requires Zn(2+) as cofactor.

It is found in the cytoplasm. Functionally, participates actively in the response to hyperosmotic and heat shock by preventing the aggregation of stress-denatured proteins and by disaggregating proteins, also in an autonomous, DnaK-independent fashion. Unfolded proteins bind initially to DnaJ; upon interaction with the DnaJ-bound protein, DnaK hydrolyzes its bound ATP, resulting in the formation of a stable complex. GrpE releases ADP from DnaK; ATP binding to DnaK triggers the release of the substrate protein, thus completing the reaction cycle. Several rounds of ATP-dependent interactions between DnaJ, DnaK and GrpE are required for fully efficient folding. Also involved, together with DnaK and GrpE, in the DNA replication of plasmids through activation of initiation proteins. This is Chaperone protein DnaJ from Francisella tularensis subsp. holarctica (strain LVS).